We begin with the raw amino-acid sequence, 192 residues long: Pyridoxal 5'-phosphate synthase subunit PdxT (192 aa).

46-48 (GES) provides a ligand contact to L-glutamine. Residue Cys76 is the Nucleophile of the active site. L-glutamine is bound by residues Arg103 and 131 to 132 (IR). Residues His167 and Glu169 each act as charge relay system in the active site.

Belongs to the glutaminase PdxT/SNO family. In the presence of PdxS, forms a dodecamer of heterodimers. Only shows activity in the heterodimer.

It carries out the reaction aldehydo-D-ribose 5-phosphate + D-glyceraldehyde 3-phosphate + L-glutamine = pyridoxal 5'-phosphate + L-glutamate + phosphate + 3 H2O + H(+). It catalyses the reaction L-glutamine + H2O = L-glutamate + NH4(+). The protein operates within cofactor biosynthesis; pyridoxal 5'-phosphate biosynthesis. Its function is as follows. Catalyzes the hydrolysis of glutamine to glutamate and ammonia as part of the biosynthesis of pyridoxal 5'-phosphate. The resulting ammonia molecule is channeled to the active site of PdxS. This is Pyridoxal 5'-phosphate synthase subunit PdxT from Koribacter versatilis (strain Ellin345).